Consider the following 81-residue polypeptide: Protein Vpu (81 aa).

Topologically, residues 1–6 (MQPIQI) are extracellular. A helical membrane pass occupies residues 7 to 27 (AIAALVVAIIIAIVVWSIVII). Residues 28–81 (EYRKILRQRKIDRLIDRLIERAEDSGNESEGEISALVEMGVEMGHHAPWDIDDL) lie on the Cytoplasmic side of the membrane. Residues serine 52 and serine 56 each carry the phosphoserine; by host CK2 modification.

The protein belongs to the HIV-1 VPU protein family. Homopentamer. Interacts with host CD4 and BRTC; these interactions induce proteasomal degradation of CD4. Interacts with host BST2; this interaction leads to the degradation of host BST2. Interacts with host FBXW11. Interacts with host AP1M1; this interaction plays a role in the mistrafficking and subsequent degradation of host BST2. Interacts with host RANBP2; this interaction allows Vpu to down-regulate host BLM sumoylation. Post-translationally, phosphorylated by host CK2. This phosphorylation is necessary for interaction with human BTRC and degradation of CD4.

The protein localises to the host membrane. Ion channel activity is inhibited by hexamethylene amiloride in vitro. Enhances virion budding by targeting host CD4 and Tetherin/BST2 to proteasome degradation. Degradation of CD4 prevents any unwanted premature interactions between viral Env and its host receptor CD4 in the endoplasmic reticulum. Degradation of antiretroviral protein Tetherin/BST2 is important for virion budding, as BST2 tethers new viral particles to the host cell membrane. Mechanistically, Vpu bridges either CD4 or BST2 to BTRC, a substrate recognition subunit of the Skp1/Cullin/F-box protein E3 ubiquitin ligase, induces their ubiquitination and subsequent proteasomal degradation. The alteration of the E3 ligase specificity by Vpu seems to promote the degradation of host IKBKB, leading to NF-kappa-B down-regulation and subsequent apoptosis. Acts as a viroporin that forms an oligomeric ion channel in membranes. Modulates the host DNA repair mechanisms to promote degradation of nuclear viral cDNA in cells that are already productively infected in order to suppress immune sensing and proviral hyper-integration (superinfection). Manipulates PML-NBs and modulates SUMOylation of host BLM protein thereby enhancing its DNA-end processing activity toward viral unintegrated linear DNA. Also inhibits RAD52-mediated homologous repair of viral cDNA, preventing the generation of dead-end circular forms of single copies of the long terminal repeat and permitting sustained nucleolytic attack. The chain is Protein Vpu from Homo sapiens (Human).